A 253-amino-acid polypeptide reads, in one-letter code: Triosephosphate isomerase (253 aa).

Residue 9–11 (NWK) coordinates substrate. The active-site Electrophile is the histidine 95. The Proton acceptor role is filled by glutamate 167. Substrate-binding positions include glycine 173, serine 213, and 234–235 (GG). At serine 213 the chain carries Phosphoserine.

It belongs to the triosephosphate isomerase family. In terms of assembly, homodimer.

It localises to the cytoplasm. The catalysed reaction is D-glyceraldehyde 3-phosphate = dihydroxyacetone phosphate. The protein operates within carbohydrate biosynthesis; gluconeogenesis. Its pathway is carbohydrate degradation; glycolysis; D-glyceraldehyde 3-phosphate from glycerone phosphate: step 1/1. Its function is as follows. Involved in the gluconeogenesis. Catalyzes stereospecifically the conversion of dihydroxyacetone phosphate (DHAP) to D-glyceraldehyde-3-phosphate (G3P). The chain is Triosephosphate isomerase from Lysinibacillus sphaericus (strain C3-41).